The sequence spans 114 residues: Fumarate reductase subunit D (114 aa).

The next 3 membrane-spanning stretches (helical) occupy residues 24–44, 50–70, and 92–112; these read VSAIFLPVVILIIGLLLPFGL, LITFAYSWIGKLVILVLTIFP, and GGFIFYGLATIYTVWVLFAVI.

This sequence belongs to the FrdD family. Part of an enzyme complex containing four subunits: a flavoprotein (FrdA), an iron-sulfur protein (FrdB), and two hydrophobic anchor proteins (FrdC and FrdD).

Its subcellular location is the cell inner membrane. Its function is as follows. Anchors the catalytic components of the fumarate reductase complex to the cell membrane, binds quinones. This chain is Fumarate reductase subunit D, found in Haemophilus influenzae (strain 86-028NP).